The following is a 189-amino-acid chain: Threonylcarbamoyl-AMP synthase (189 aa).

Positions 9-189 (ASAQRKLSVY…IDGETGKRLR (181 aa)) constitute a YrdC-like domain.

It belongs to the SUA5 family. TsaC subfamily.

It localises to the cytoplasm. The enzyme catalyses L-threonine + hydrogencarbonate + ATP = L-threonylcarbamoyladenylate + diphosphate + H2O. Functionally, required for the formation of a threonylcarbamoyl group on adenosine at position 37 (t(6)A37) in tRNAs that read codons beginning with adenine. Catalyzes the conversion of L-threonine, HCO(3)(-)/CO(2) and ATP to give threonylcarbamoyl-AMP (TC-AMP) as the acyladenylate intermediate, with the release of diphosphate. The protein is Threonylcarbamoyl-AMP synthase of Neisseria gonorrhoeae (strain ATCC 700825 / FA 1090).